Consider the following 423-residue polypeptide: LysM domain-containing GPI-anchored protein 3 (423 aa).

The signal sequence occupies residues 1–24; it reads MKNPEKPLLLFLILASSLASMATA. 4 cysteine pairs are disulfide-bonded: cysteine 31-cysteine 97, cysteine 37-cysteine 160, cysteine 95-cysteine 158, and cysteine 97-cysteine 160. One can recognise a LysM 1 domain in the interval 107–154; that stretch reads THYKTRTSDTLGSIADSVYGGLVSPEQIQVANSETDLSVLDVGTKLVI. Residue asparagine 162 is glycosylated (N-linked (GlcNAc...) asparagine). The region spanning 173-216 is the LysM 2 domain; the sequence is LSYVVRGIDTMAGIAKRFSTSVTDLTNVNAMGAPDINPGDILAV. 2 disulfides stabilise this stretch: cysteine 221–cysteine 253 and cysteine 248–cysteine 276. N-linked (GlcNAc...) asparagine glycosylation is present at asparagine 238. Residue asparagine 285 is glycosylated (N-linked (GlcNAc...) asparagine). Glycine 394 carries the GPI-anchor amidated glycine lipid modification. Positions 395 to 423 are cleaved as a propeptide — removed in mature form; that stretch reads GSISIASCPLSYYSFIALLIPIGSCFFVF.

In terms of assembly, interacts with peptidoglycans.

The protein localises to the cell membrane. Functionally, required as a cell surface receptor for peptidoglycan (PGN) elicitor signaling leading to innate immunity. Plays an essential role in detecting PGNs and restricting bacterial growth (of Pseudomonas syringae pv. tomato DC3000 for example). The protein is LysM domain-containing GPI-anchored protein 3 (LYM3) of Arabidopsis thaliana (Mouse-ear cress).